The chain runs to 181 residues: Oligoribonuclease (181 aa).

The 164-residue stretch at 8 to 171 (LIWVDLEMTG…VDIQESIAEL (164 aa)) folds into the Exonuclease domain. Tyr-129 is an active-site residue.

This sequence belongs to the oligoribonuclease family.

The protein resides in the cytoplasm. 3'-to-5' exoribonuclease specific for small oligoribonucleotides. The chain is Oligoribonuclease from Shewanella loihica (strain ATCC BAA-1088 / PV-4).